The chain runs to 193 residues: Cysteine and glycine-rich protein 1 (193 aa).

Residues 10 to 61 (CGVCQKTVYFAEEVQCEGNSFHKSCFLCMVCKKNLDSTTVAVHGEEIYCKSC) form the LIM zinc-binding 1 domain. The short motif at 64–69 (KKYGPK) is the Nuclear localization signal element. A Phosphoserine modification is found at Ser81. The residue at position 84 (Lys84) is an N6-acetyllysine. Residue Lys91 forms a Glycyl lysine isopeptide (Lys-Gly) (interchain with G-Cter in SUMO2) linkage. N6-acetyllysine occurs at positions 112, 131, 137, and 161. The LIM zinc-binding 2 domain maps to 119–170 (CPRCSQAVYAAEKVIGAGKSWHKACFRCAKCGKGLESTTLADKDGEIYCKGC). Ser192 is modified (phosphoserine).

Interacts with ASCC1; ASCC2 and TRIP4.

The protein resides in the nucleus. Could play a role in neuronal development. The sequence is that of Cysteine and glycine-rich protein 1 (CSRP1) from Pongo abelii (Sumatran orangutan).